The primary structure comprises 495 residues: N-succinylglutamate 5-semialdehyde dehydrogenase (495 aa).

228–233 (GSYATG) contacts NAD(+). Catalysis depends on residues Glu-251 and Cys-285.

The protein belongs to the aldehyde dehydrogenase family. AstD subfamily.

The catalysed reaction is N-succinyl-L-glutamate 5-semialdehyde + NAD(+) + H2O = N-succinyl-L-glutamate + NADH + 2 H(+). The protein operates within amino-acid degradation; L-arginine degradation via AST pathway; L-glutamate and succinate from L-arginine: step 4/5. In terms of biological role, catalyzes the NAD-dependent reduction of succinylglutamate semialdehyde into succinylglutamate. The polypeptide is N-succinylglutamate 5-semialdehyde dehydrogenase (Legionella pneumophila (strain Paris)).